A 191-amino-acid polypeptide reads, in one-letter code: GTP-dependent dephospho-CoA kinase (191 aa).

Residues Asp46, Asp65, Lys67, and Glu122 each coordinate GTP.

This sequence belongs to the GTP-dependent DPCK family.

It carries out the reaction 3'-dephospho-CoA + GTP = GDP + CoA + H(+). It participates in cofactor biosynthesis; coenzyme A biosynthesis. Catalyzes the GTP-dependent phosphorylation of the 3'-hydroxyl group of dephosphocoenzyme A to form coenzyme A (CoA). This is GTP-dependent dephospho-CoA kinase from Methanopyrus kandleri (strain AV19 / DSM 6324 / JCM 9639 / NBRC 100938).